A 187-amino-acid chain; its full sequence is Pseudo histidine-containing phosphotransfer protein 1 (187 aa).

The HPt domain occupies 74–169 (SPNFVEEVVT…AVLRQKLESY (96 aa)).

In terms of biological role, functions as a two-component phosphorelay mediator between cytokinin sensor histidine kinases and response regulators (B-type ARRs). Plays an important role in propagating cytokinin signal transduction. In Oryza sativa subsp. japonica (Rice), this protein is Pseudo histidine-containing phosphotransfer protein 1.